The primary structure comprises 504 residues: Glucosaminyl-phosphatidylinositol-acyltransferase PIGW (504 aa).

Residues 1-21 (MSEKQMKEAFVSNLNGTTVLE) are Lumenal-facing. Asparagine 15 carries an N-linked (GlcNAc...) asparagine glycan. Residues 22–42 (ITQGLCFPAFCILCRGFLIIF) traverse the membrane as a helical segment. At 43–56 (SQYLCSFSPTWKTR) the chain is on the cytoplasmic side. The helical transmembrane segment at 57–75 (FLTDFVVLIVPMVATLTIW) threads the bilayer. The Lumenal portion of the chain corresponds to 76–81 (ASFILL). Residues 82–98 (ELLGVIIFGAGLLYQIY) traverse the membrane as a helical segment. The Cytoplasmic portion of the chain corresponds to 99–131 (RRRTCYARLPFLKILEKFLNISLESEYNPAISC). Residues 132–152 (FRVITSAFTAIAILAVDFPLF) form a helical membrane-spanning segment. The Lumenal segment spans residues 153 to 162 (PRRFAKTELY). Residues 163-183 (GTGAMDFGVGGFVFGSAMVCL) traverse the membrane as a helical segment. At 184–202 (EVRRRKYMEGSKLHYFTNS) the chain is on the cytoplasmic side. Residues 203–223 (LYSVWPLVFLGIGRLAIIKSI) traverse the membrane as a helical segment. The Lumenal segment spans residues 224-237 (GYQEHLTEYGVHWN). The helical transmembrane segment at 238–258 (FFFTIIVVKLITPLLLIIFPL) threads the bilayer. Over 259 to 260 (NK) the chain is Cytoplasmic. Residues 261–281 (SWIIALGITVLYQLALDFTSL) form a helical membrane-spanning segment. The Lumenal segment spans residues 282–305 (KRLILYGTDGSGTRVGLLNANREG). Residues 306–326 (IISTLGYVAIHMAGVQTGLYM) form a helical membrane-spanning segment. Over 327 to 338 (HKNRSHIKDLIK) the chain is Cytoplasmic. Residues 339-359 (VACFLLLAAISLFISLYVVQV) traverse the membrane as a helical segment. The Lumenal segment spans residues 360–370 (NVEAVSRRMAN). The helical transmembrane segment at 371-391 (LAFCIWIVASSLILLSSLLLG) threads the bilayer. The Cytoplasmic portion of the chain corresponds to 392-448 (DIILSFAKFLIKGALVPCSWKLIQSPVTNKKHSESLVPEAERMEPSLCLITALNRKQ). A Phosphoserine modification is found at serine 416. A helical transmembrane segment spans residues 449–469 (LIFFLLSNITTGLINLMVDTL). Topologically, residues 470 to 473 (HSST) are lumenal. Residues 474–494 (LWALFVVNLYMFSNCLIVYVL) form a helical membrane-spanning segment. At 495-504 (YLQDKTVQFW) the chain is on the cytoplasmic side.

This sequence belongs to the PIGW family.

The protein localises to the endoplasmic reticulum membrane. Its pathway is glycolipid biosynthesis; glycosylphosphatidylinositol-anchor biosynthesis. Acyltransferase that catalyzes the acyl transfer from an acyl-CoA at the 2-OH position of the inositol ring of glucosaminyl phosphatidylinositol (GlcN-PI) to generate glucosaminyl acyl phosphatidylinositol (GlcN-(acyl)PI) and participates in the fourth step of GPI-anchor biosynthesis. Required for the transport of GPI-anchored proteins to the plasma membrane. Acetylation during GPI-anchor biosynthesis is not essential for the subsequent mannosylation and is usually removed soon after the attachment of GPIs to proteins. The protein is Glucosaminyl-phosphatidylinositol-acyltransferase PIGW of Homo sapiens (Human).